The chain runs to 162 residues: Large ribosomal subunit protein uL10 (162 aa).

This sequence belongs to the universal ribosomal protein uL10 family. As to quaternary structure, part of the ribosomal stalk of the 50S ribosomal subunit. The N-terminus interacts with L11 and the large rRNA to form the base of the stalk. The C-terminus forms an elongated spine to which L12 dimers bind in a sequential fashion forming a multimeric L10(L12)X complex.

In terms of biological role, forms part of the ribosomal stalk, playing a central role in the interaction of the ribosome with GTP-bound translation factors. This Acholeplasma laidlawii (strain PG-8A) protein is Large ribosomal subunit protein uL10.